We begin with the raw amino-acid sequence, 309 residues long: Probable manganese-dependent inorganic pyrophosphatase (309 aa).

His-9, Asp-13, Asp-15, Asp-75, His-97, and Asp-149 together coordinate Mn(2+).

It belongs to the PPase class C family. It depends on Mn(2+) as a cofactor.

It localises to the cytoplasm. The catalysed reaction is diphosphate + H2O = 2 phosphate + H(+). The polypeptide is Probable manganese-dependent inorganic pyrophosphatase (Staphylococcus aureus (strain COL)).